The primary structure comprises 167 residues: Phosphopantetheine adenylyltransferase (167 aa).

Serine 9 is a binding site for substrate. Residues 9 to 10 (SF) and histidine 17 contribute to the ATP site. Residues lysine 41, leucine 73, and lysine 87 each contribute to the substrate site. Residues 88-90 (GLR), glutamate 98, and 123-129 (YSYLSSS) each bind ATP.

It belongs to the bacterial CoaD family. As to quaternary structure, homohexamer. Mg(2+) serves as cofactor.

It localises to the cytoplasm. It carries out the reaction (R)-4'-phosphopantetheine + ATP + H(+) = 3'-dephospho-CoA + diphosphate. It functions in the pathway cofactor biosynthesis; coenzyme A biosynthesis; CoA from (R)-pantothenate: step 4/5. Its function is as follows. Reversibly transfers an adenylyl group from ATP to 4'-phosphopantetheine, yielding dephospho-CoA (dPCoA) and pyrophosphate. The polypeptide is Phosphopantetheine adenylyltransferase (Caldicellulosiruptor bescii (strain ATCC BAA-1888 / DSM 6725 / KCTC 15123 / Z-1320) (Anaerocellum thermophilum)).